A 214-amino-acid chain; its full sequence is Type IV major pilin protein PilE1 (214 aa).

The propeptide at 1–7 is leader sequence; sequence MNTLQKG. Phe8 bears the N-methylphenylalanine mark. The chain crosses the membrane as a helical span at residues 8 to 28; that stretch reads FTLIELMIVIAIVGILAAVAL. Residues Cys127 and Cys161 are joined by a disulfide bond. The segment at 182-214 is disordered; it reads AGTDAVTADTTGKDKEIDTKHLPSTCRDKSSAE. Positions 192-214 are enriched in basic and acidic residues; the sequence is TGKDKEIDTKHLPSTCRDKSSAE.

The protein belongs to the N-Me-Phe pilin family. The pili are polar flexible filaments of about 5.4 nanometers diameter and 2.5 micrometers average length; they consist of only a single polypeptide chain arranged in a helical configuration of five subunits per turn in the assembled pilus.

It is found in the fimbrium. Its subcellular location is the membrane. Its function is as follows. Major component of the type IV pilus (T4P) that plays a role in cellular adherence, microcolony formation, resistance to neutrophil mediated killing, twitching motility as well as transformation. Mediates the attachment and the formation of bacterial microcolonies on host epithelial cells. Mechanistically, pili retractation induces host NF-kappa-B activation in infected cells, which is temporally associated with the formation of gonococcal microcolonies. This chain is Type IV major pilin protein PilE1 (pilE1), found in Neisseria gonorrhoeae.